The sequence spans 322 residues: Transaldolase (322 aa).

Catalysis depends on K132, which acts as the Schiff-base intermediate with substrate. Phosphoserine is present on residues S268 and S269.

Belongs to the transaldolase family. Type 1 subfamily. As to quaternary structure, homodimer.

The catalysed reaction is D-sedoheptulose 7-phosphate + D-glyceraldehyde 3-phosphate = D-erythrose 4-phosphate + beta-D-fructose 6-phosphate. Its pathway is carbohydrate degradation; pentose phosphate pathway; D-glyceraldehyde 3-phosphate and beta-D-fructose 6-phosphate from D-ribose 5-phosphate and D-xylulose 5-phosphate (non-oxidative stage): step 2/3. Transaldolase is important for the balance of metabolites in the pentose-phosphate pathway. The protein is Transaldolase (tal1) of Schizosaccharomyces pombe (strain 972 / ATCC 24843) (Fission yeast).